We begin with the raw amino-acid sequence, 207 residues long: Histidine biosynthesis bifunctional protein HisIE (207 aa).

The segment at 1–117 (MQNFKELNEK…KISKNADFVF (117 aa)) is phosphoribosyl-AMP cyclohydrolase. Positions 118 to 207 (LARLEKLINA…ISKLKERHKA (90 aa)) are phosphoribosyl-ATP pyrophosphohydrolase.

In the N-terminal section; belongs to the PRA-CH family. It in the C-terminal section; belongs to the PRA-PH family.

The protein resides in the cytoplasm. It catalyses the reaction 1-(5-phospho-beta-D-ribosyl)-ATP + H2O = 1-(5-phospho-beta-D-ribosyl)-5'-AMP + diphosphate + H(+). It carries out the reaction 1-(5-phospho-beta-D-ribosyl)-5'-AMP + H2O = 1-(5-phospho-beta-D-ribosyl)-5-[(5-phospho-beta-D-ribosylamino)methylideneamino]imidazole-4-carboxamide. It participates in amino-acid biosynthesis; L-histidine biosynthesis; L-histidine from 5-phospho-alpha-D-ribose 1-diphosphate: step 2/9. Its pathway is amino-acid biosynthesis; L-histidine biosynthesis; L-histidine from 5-phospho-alpha-D-ribose 1-diphosphate: step 3/9. This chain is Histidine biosynthesis bifunctional protein HisIE (hisI), found in Campylobacter jejuni subsp. jejuni serotype O:2 (strain ATCC 700819 / NCTC 11168).